The following is a 104-amino-acid chain: MIRKAFVMQVNPDAHEEYQRRHNPIWPELEAVLKSHGAHNYAIYLDKAHNLLFATVEIESEERWNAVASTDVCQRWWKYMTDVMPANADNSPVSSELQEVFYLP.

Y18 contributes to the substrate binding site. H22 functions as the Proton donor in the catalytic mechanism. Substrate is bound by residues Y41 and 76-77; that span reads WW.

This sequence belongs to the rhamnose mutarotase family. Homodimer.

It is found in the cytoplasm. The catalysed reaction is alpha-L-rhamnose = beta-L-rhamnose. It participates in carbohydrate metabolism; L-rhamnose metabolism. Its function is as follows. Involved in the anomeric conversion of L-rhamnose. The protein is L-rhamnose mutarotase of Escherichia coli O1:K1 / APEC.